Consider the following 427-residue polypeptide: Light-independent protochlorophyllide reductase subunit N (427 aa).

[4Fe-4S] cluster-binding residues include cysteine 32, cysteine 57, and cysteine 118.

It belongs to the BchN/ChlN family. Protochlorophyllide reductase is composed of three subunits; BchL, BchN and BchB. Forms a heterotetramer of two BchB and two BchN subunits. Requires [4Fe-4S] cluster as cofactor.

It carries out the reaction chlorophyllide a + oxidized 2[4Fe-4S]-[ferredoxin] + 2 ADP + 2 phosphate = protochlorophyllide a + reduced 2[4Fe-4S]-[ferredoxin] + 2 ATP + 2 H2O. Its pathway is porphyrin-containing compound metabolism; bacteriochlorophyll biosynthesis (light-independent). In terms of biological role, component of the dark-operative protochlorophyllide reductase (DPOR) that uses Mg-ATP and reduced ferredoxin to reduce ring D of protochlorophyllide (Pchlide) to form chlorophyllide a (Chlide). This reaction is light-independent. The NB-protein (BchN-BchB) is the catalytic component of the complex. The chain is Light-independent protochlorophyllide reductase subunit N from Rubrivivax gelatinosus (strain NBRC 100245 / IL144).